Consider the following 228-residue polypeptide: MAASVRHLLKPWTPSLCLMRWSRYNPYYLDPEPRKDAPVSDSELSPEQKELQELKTVRPIKAALTGDTSSAFSDPLISKFINMMMYDGNKVLARGIMTQTLETIKRKQVEKYHKSPAAKREEIECNPYAIFHQAMENCKPVIGLASIQKGGKFYQVPVPLTDNRRRFMAMKWMITECRTNKQGRTLMYEKLSQELLAAFANEGNVIKRKHDLHKMAEANRAYAHYRWW.

A mitochondrion-targeting transit peptide spans 1-33; that stretch reads MAASVRHLLKPWTPSLCLMRWSRYNPYYLDPEP.

Belongs to the universal ribosomal protein uS7 family. In terms of assembly, component of the mitochondrial ribosome small subunit (28S) which comprises a 12S rRNA and about 30 distinct proteins.

It is found in the mitochondrion. In Danio rerio (Zebrafish), this protein is Small ribosomal subunit protein uS7m (mrps7).